A 492-amino-acid chain; its full sequence is Cobyric acid synthase (492 aa).

Residues 252–440 (QLNVVVPVLT…LHGIFEQTEA (189 aa)) form the GATase cobBQ-type domain. Cysteine 333 functions as the Nucleophile in the catalytic mechanism. Histidine 432 is a catalytic residue.

Belongs to the CobB/CobQ family. CobQ subfamily.

The protein operates within cofactor biosynthesis; adenosylcobalamin biosynthesis. Catalyzes amidations at positions B, D, E, and G on adenosylcobyrinic A,C-diamide. NH(2) groups are provided by glutamine, and one molecule of ATP is hydrogenolyzed for each amidation. The protein is Cobyric acid synthase of Photobacterium profundum (strain SS9).